The chain runs to 368 residues: tRNA(Met) cytidine acetate ligase (368 aa).

Residues 7-20, glycine 96, asparagine 152, and arginine 175 contribute to the ATP site; that span reads IAEFNPFHNGHKYL.

The protein belongs to the TmcAL family.

The protein localises to the cytoplasm. The catalysed reaction is cytidine(34) in elongator tRNA(Met) + acetate + ATP = N(4)-acetylcytidine(34) in elongator tRNA(Met) + AMP + diphosphate. Functionally, catalyzes the formation of N(4)-acetylcytidine (ac(4)C) at the wobble position of elongator tRNA(Met), using acetate and ATP as substrates. First activates an acetate ion to form acetyladenylate (Ac-AMP) and then transfers the acetyl group to tRNA to form ac(4)C34. The sequence is that of tRNA(Met) cytidine acetate ligase from Streptococcus pyogenes serotype M5 (strain Manfredo).